A 119-amino-acid polypeptide reads, in one-letter code: Large ribosomal subunit protein bL20 (119 aa).

This sequence belongs to the bacterial ribosomal protein bL20 family.

In terms of biological role, binds directly to 23S ribosomal RNA and is necessary for the in vitro assembly process of the 50S ribosomal subunit. It is not involved in the protein synthesizing functions of that subunit. The protein is Large ribosomal subunit protein bL20 of Dehalococcoides mccartyi (strain ATCC BAA-2100 / JCM 16839 / KCTC 5957 / BAV1).